The following is a 151-amino-acid chain: Ribonuclease H (151 aa).

Residues 1–143 (MYKKIEIFTD…CDQLARLAAK (143 aa)) enclose the RNase H type-1 domain. Mg(2+) contacts are provided by D10, E48, D70, and D135.

Belongs to the RNase H family. As to quaternary structure, monomer. Mg(2+) serves as cofactor.

It localises to the cytoplasm. It carries out the reaction Endonucleolytic cleavage to 5'-phosphomonoester.. Endonuclease that specifically degrades the RNA of RNA-DNA hybrids. This chain is Ribonuclease H, found in Blochmanniella pennsylvanica (strain BPEN).